Consider the following 437-residue polypeptide: 3-ketoacyl-CoA thiolase (437 aa).

C99 acts as the Acyl-thioester intermediate in catalysis. Residues H392 and C422 each act as proton acceptor in the active site.

This sequence belongs to the thiolase-like superfamily. Thiolase family. In terms of assembly, heterotetramer of two alpha chains (FadJ) and two beta chains (FadI).

It is found in the cytoplasm. It catalyses the reaction an acyl-CoA + acetyl-CoA = a 3-oxoacyl-CoA + CoA. Its pathway is lipid metabolism; fatty acid beta-oxidation. Catalyzes the final step of fatty acid oxidation in which acetyl-CoA is released and the CoA ester of a fatty acid two carbons shorter is formed. The protein is 3-ketoacyl-CoA thiolase of Pectobacterium atrosepticum (strain SCRI 1043 / ATCC BAA-672) (Erwinia carotovora subsp. atroseptica).